The sequence spans 122 residues: MIQTESMLDVADNSGAKRVQCIKVLGGSHRRYAAIGDIIKVTVKEAIPRGRVKKGQVLNAVVVRTRKGVRRSDGSVIRFDVNSAVLLNASGQPIGTRIFGPVTRELRTEQFMKIVSLAPEVL.

This sequence belongs to the universal ribosomal protein uL14 family. As to quaternary structure, part of the 50S ribosomal subunit. Forms a cluster with proteins L3 and L19. In the 70S ribosome, L14 and L19 interact and together make contacts with the 16S rRNA in bridges B5 and B8.

Functionally, binds to 23S rRNA. Forms part of two intersubunit bridges in the 70S ribosome. In Marinomonas sp. (strain MWYL1), this protein is Large ribosomal subunit protein uL14.